Here is a 396-residue protein sequence, read N- to C-terminus: Penicillopepsin-1 (396 aa).

An N-terminal signal peptide occupies residues 1 to 20; the sequence is MVVFSKVTASLACFSAVVSA. Positions 21–72 are cleaved as a propeptide — activation peptide; that stretch reads AAVPVKSPRQGFSVNQVQKTVTGTRTVNLPGVYANALAKYGATVPANVHAAA. The region spanning 88 to 393 is the Peptidase A1 domain; it reads YLTPVKIGES…DAEGPRLGFA (306 aa). Active-site residues include Asp-104 and Asp-285. Residue Asn-311 is glycosylated (N-linked (GlcNAc...) asparagine). Cys-321 and Cys-356 are disulfide-bonded.

Belongs to the peptidase A1 family. Monomer.

The protein localises to the secreted. It catalyses the reaction Hydrolysis of proteins with broad specificity similar to that of pepsin A, preferring hydrophobic residues at P1 and P1', but also cleaving 20-Gly-|-Glu-21 in the B chain of insulin. Clots milk, and activates trypsinogen.. Functionally, secreted aspartic endopeptidase that allows assimilation of proteinaceous substrates. The scissile peptide bond is attacked by a nucleophilic water molecule activated by two aspartic residues in the active site. Shows a broad primary substrate specificity. Favors hydrophobic residues at the P1 and P1' positions, but can also activate trypsinogen and hydrolyze the B chain of insulin between positions 'Gly-20' and 'Glu-21'. The chain is Penicillopepsin-1 (pepA) from Penicillium rubens (strain ATCC 28089 / DSM 1075 / NRRL 1951 / Wisconsin 54-1255) (Penicillium chrysogenum).